A 321-amino-acid chain; its full sequence is Putative ribose-phosphate pyrophosphokinase 2 (321 aa).

ATP is bound by residues 43–45 (DGE) and 102–103 (RQ). Mg(2+)-binding residues include His-136 and Asp-176. Residue Asp-225 coordinates D-ribose 5-phosphate.

It belongs to the ribose-phosphate pyrophosphokinase family. Class I subfamily. As to quaternary structure, homohexamer. Mg(2+) serves as cofactor.

The protein resides in the cytoplasm. The catalysed reaction is D-ribose 5-phosphate + ATP = 5-phospho-alpha-D-ribose 1-diphosphate + AMP + H(+). It participates in metabolic intermediate biosynthesis; 5-phospho-alpha-D-ribose 1-diphosphate biosynthesis; 5-phospho-alpha-D-ribose 1-diphosphate from D-ribose 5-phosphate (route I): step 1/1. Functionally, involved in the biosynthesis of the central metabolite phospho-alpha-D-ribosyl-1-pyrophosphate (PRPP) via the transfer of pyrophosphoryl group from ATP to 1-hydroxyl of ribose-5-phosphate (Rib-5-P). The sequence is that of Putative ribose-phosphate pyrophosphokinase 2 from Lactiplantibacillus plantarum (strain ATCC BAA-793 / NCIMB 8826 / WCFS1) (Lactobacillus plantarum).